Reading from the N-terminus, the 295-residue chain is WHI2-like protein P4H10.16c (295 aa).

Belongs to the WHI2 family.

Its subcellular location is the cytoplasm. The protein resides in the nucleus. This chain is WHI2-like protein P4H10.16c, found in Schizosaccharomyces pombe (strain 972 / ATCC 24843) (Fission yeast).